A 211-amino-acid chain; its full sequence is Transcriptional regulator NarO (211 aa).

The 52-residue stretch at 154–205 (LTARQREVLETAHEMGYFEHPREANATEVAAALDINRSTFTEHLSAAQSKLL) folds into the HTH bat-type domain.

Activates transcription of the denitrifying genes (nitrate reductase narA and nitrite reductase nirK) under anaerobic conditions. The sequence is that of Transcriptional regulator NarO from Haloferax volcanii (strain ATCC 29605 / DSM 3757 / JCM 8879 / NBRC 14742 / NCIMB 2012 / VKM B-1768 / DS2) (Halobacterium volcanii).